The following is a 239-amino-acid chain: Biosynthetic peptidoglycan transglycosylase (239 aa).

A helical membrane pass occupies residues 29-49 (GMFGLGALMLVWIVAYAVVPV).

This sequence belongs to the glycosyltransferase 51 family.

The protein localises to the cell inner membrane. The catalysed reaction is [GlcNAc-(1-&gt;4)-Mur2Ac(oyl-L-Ala-gamma-D-Glu-L-Lys-D-Ala-D-Ala)](n)-di-trans,octa-cis-undecaprenyl diphosphate + beta-D-GlcNAc-(1-&gt;4)-Mur2Ac(oyl-L-Ala-gamma-D-Glu-L-Lys-D-Ala-D-Ala)-di-trans,octa-cis-undecaprenyl diphosphate = [GlcNAc-(1-&gt;4)-Mur2Ac(oyl-L-Ala-gamma-D-Glu-L-Lys-D-Ala-D-Ala)](n+1)-di-trans,octa-cis-undecaprenyl diphosphate + di-trans,octa-cis-undecaprenyl diphosphate + H(+). The protein operates within cell wall biogenesis; peptidoglycan biosynthesis. Peptidoglycan polymerase that catalyzes glycan chain elongation from lipid-linked precursors. In Jannaschia sp. (strain CCS1), this protein is Biosynthetic peptidoglycan transglycosylase.